The sequence spans 689 residues: Glycine--tRNA ligase beta subunit (689 aa).

Belongs to the class-II aminoacyl-tRNA synthetase family. In terms of assembly, tetramer of two alpha and two beta subunits.

The protein resides in the cytoplasm. The catalysed reaction is tRNA(Gly) + glycine + ATP = glycyl-tRNA(Gly) + AMP + diphosphate. This is Glycine--tRNA ligase beta subunit from Acinetobacter baylyi (strain ATCC 33305 / BD413 / ADP1).